The primary structure comprises 911 residues: DNA ligase 4 (911 aa).

ATP is bound by residues E271, T272, K273, L274, R278, E331, K345, F367, E427, K432, K449, and K451. The N6-AMP-lysine intermediate role is filled by K273. Residue E331 coordinates Mg(2+). Residue E427 coordinates Mg(2+). Residues 610-620 (LASKHLYIGGD) are required for catalytic activity. 2 BRCT domains span residues 654–743 (KISN…PRFM) and 808–911 (SPLS…QYLI).

This sequence belongs to the ATP-dependent DNA ligase family. In terms of assembly, interacts with XRCC4; the LIG4-XRCC4 subcomplex has a 1:2 stoichiometry and XRCC4 is required for LIG4 stability. Component of the core long-range non-homologous end joining (NHEJ) complex (also named DNA-PK complex) composed of PRKDC, LIG4, XRCC4, XRCC6/Ku70, XRCC5/Ku86 and NHEJ1/XLF. Additional component of the NHEJ complex includes PAXX. Following autophosphorylation, PRKDC dissociates from DNA, leading to formation of the short-range NHEJ complex, composed of LIG4, XRCC4, XRCC6/Ku70, XRCC5/Ku86 and NHEJ1/XLF. Interacts with DCLRE1C; the interaction is direct. Interacts with APLF. Mg(2+) is required as a cofactor. Testis, thymus, prostate and heart.

The protein resides in the nucleus. It catalyses the reaction ATP + (deoxyribonucleotide)n-3'-hydroxyl + 5'-phospho-(deoxyribonucleotide)m = (deoxyribonucleotide)n+m + AMP + diphosphate.. Its function is as follows. DNA ligase involved in DNA non-homologous end joining (NHEJ); required for double-strand break (DSB) repair and V(D)J recombination. Catalyzes the NHEJ ligation step of the broken DNA during DSB repair by resealing the DNA breaks after the gap filling is completed. Joins single-strand breaks in a double-stranded polydeoxynucleotide in an ATP-dependent reaction. LIG4 is mechanistically flexible: it can ligate nicks as well as compatible DNA overhangs alone, while in the presence of XRCC4, it can ligate ends with 2-nucleotides (nt) microhomology and 1-nt gaps. Forms a subcomplex with XRCC4; the LIG4-XRCC4 subcomplex is responsible for the NHEJ ligation step and XRCC4 enhances the joining activity of LIG4. Binding of the LIG4-XRCC4 complex to DNA ends is dependent on the assembly of the DNA-dependent protein kinase complex DNA-PK to these DNA ends. LIG4 regulates nuclear localization of XRCC4. This is DNA ligase 4 from Homo sapiens (Human).